A 392-amino-acid polypeptide reads, in one-letter code: Probable glucan endo-1,6-beta-glucosidase B (392 aa).

Residues 1–18 (MKVTRLAVLNTLATLTVA) form the signal peptide. Residue Asn31 is glycosylated (N-linked (GlcNAc...) asparagine). Glu220 functions as the Proton donor in the catalytic mechanism. The active-site Nucleophile is Glu322.

This sequence belongs to the glycosyl hydrolase 5 (cellulase A) family.

Its subcellular location is the secreted. The catalysed reaction is Random hydrolysis of (1-&gt;6)-linkages in (1-&gt;6)-beta-D-glucans.. In terms of biological role, beta-glucanases participate in the metabolism of beta-glucan, the main structural component of the cell wall. Acts on lutean, pustulan and 1,6-oligo-beta-D-glucosides. The polypeptide is Probable glucan endo-1,6-beta-glucosidase B (exgB) (Aspergillus flavus (strain ATCC 200026 / FGSC A1120 / IAM 13836 / NRRL 3357 / JCM 12722 / SRRC 167)).